Reading from the N-terminus, the 95-residue chain is Putative pterin-4-alpha-carbinolamine dehydratase (95 aa).

It belongs to the pterin-4-alpha-carbinolamine dehydratase family.

It catalyses the reaction (4aS,6R)-4a-hydroxy-L-erythro-5,6,7,8-tetrahydrobiopterin = (6R)-L-erythro-6,7-dihydrobiopterin + H2O. The chain is Putative pterin-4-alpha-carbinolamine dehydratase from Thermosynechococcus vestitus (strain NIES-2133 / IAM M-273 / BP-1).